The chain runs to 211 residues: Thiamine-phosphate synthase (211 aa).

4-amino-2-methyl-5-(diphosphooxymethyl)pyrimidine is bound by residues 37–41 (QLRIK) and Asn69. 2 residues coordinate Mg(2+): Asp70 and Asp89. Ser108 is a binding site for 4-amino-2-methyl-5-(diphosphooxymethyl)pyrimidine. 134–136 (TQT) is a binding site for 2-[(2R,5Z)-2-carboxy-4-methylthiazol-5(2H)-ylidene]ethyl phosphate. Position 137 (Lys137) interacts with 4-amino-2-methyl-5-(diphosphooxymethyl)pyrimidine. 2-[(2R,5Z)-2-carboxy-4-methylthiazol-5(2H)-ylidene]ethyl phosphate is bound by residues Gly166 and 186-187 (VS).

It belongs to the thiamine-phosphate synthase family. It depends on Mg(2+) as a cofactor.

The enzyme catalyses 2-[(2R,5Z)-2-carboxy-4-methylthiazol-5(2H)-ylidene]ethyl phosphate + 4-amino-2-methyl-5-(diphosphooxymethyl)pyrimidine + 2 H(+) = thiamine phosphate + CO2 + diphosphate. The catalysed reaction is 2-(2-carboxy-4-methylthiazol-5-yl)ethyl phosphate + 4-amino-2-methyl-5-(diphosphooxymethyl)pyrimidine + 2 H(+) = thiamine phosphate + CO2 + diphosphate. It carries out the reaction 4-methyl-5-(2-phosphooxyethyl)-thiazole + 4-amino-2-methyl-5-(diphosphooxymethyl)pyrimidine + H(+) = thiamine phosphate + diphosphate. It functions in the pathway cofactor biosynthesis; thiamine diphosphate biosynthesis; thiamine phosphate from 4-amino-2-methyl-5-diphosphomethylpyrimidine and 4-methyl-5-(2-phosphoethyl)-thiazole: step 1/1. Its function is as follows. Condenses 4-methyl-5-(beta-hydroxyethyl)thiazole monophosphate (THZ-P) and 2-methyl-4-amino-5-hydroxymethyl pyrimidine pyrophosphate (HMP-PP) to form thiamine monophosphate (TMP). In Salmonella paratyphi B (strain ATCC BAA-1250 / SPB7), this protein is Thiamine-phosphate synthase.